The chain runs to 90 residues: Small ribosomal subunit protein bS20 (90 aa).

Positions 1-10 (MANHKSTQKS) are enriched in polar residues. The disordered stretch occupies residues 1-25 (MANHKSTQKSIRQDQKRNLINKSRK).

Belongs to the bacterial ribosomal protein bS20 family.

Functionally, binds directly to 16S ribosomal RNA. The sequence is that of Small ribosomal subunit protein bS20 from Orientia tsutsugamushi (strain Boryong) (Rickettsia tsutsugamushi).